The sequence spans 341 residues: Phosphate acyltransferase (341 aa).

The protein belongs to the PlsX family. Homodimer. Probably interacts with PlsY.

Its subcellular location is the cytoplasm. The catalysed reaction is a fatty acyl-[ACP] + phosphate = an acyl phosphate + holo-[ACP]. The protein operates within lipid metabolism; phospholipid metabolism. Functionally, catalyzes the reversible formation of acyl-phosphate (acyl-PO(4)) from acyl-[acyl-carrier-protein] (acyl-ACP). This enzyme utilizes acyl-ACP as fatty acyl donor, but not acyl-CoA. The chain is Phosphate acyltransferase from Idiomarina loihiensis (strain ATCC BAA-735 / DSM 15497 / L2-TR).